Here is a 344-residue protein sequence, read N- to C-terminus: Nuclear distribution protein nudE-like 1-B (344 aa).

Residues Tyr-26 to Asp-189 are a coiled coil.

The protein belongs to the nudE family. Phosphorylated in mitosis.

It is found in the cytoplasm. Its subcellular location is the cytoskeleton. The protein resides in the microtubule organizing center. It localises to the centrosome. The protein localises to the spindle. In terms of biological role, required for organization of the cellular microtubule array and microtubule anchoring at the centrosome. Positively regulates the activity of the minus-end directed microtubule motor protein dynein. May enhance dynein-mediated microtubule sliding by targeting dynein to the microtubule plus end. This chain is Nuclear distribution protein nudE-like 1-B (ndel1b), found in Danio rerio (Zebrafish).